The sequence spans 329 residues: G-protein coupled bile acid receptor 1 (329 aa).

Residues 1 to 15 (MMTPNSTELSAIPMG) are Extracellular-facing. An N-linked (GlcNAc...) asparagine glycan is attached at asparagine 5. The chain crosses the membrane as a helical span at residues 16 to 36 (VLGLSLALASLIVIANLLLAL). At 37-49 (GIALDRHLRSPPA) the chain is on the cytoplasmic side. The helical transmembrane segment at 50–70 (GCFFLSLLLAGLLTGLALPML) threads the bilayer. Residues 71 to 84 (PGLWSRNHQGYWSC) lie on the Extracellular side of the membrane. Residues cysteine 84 and cysteine 154 are joined by a disulfide bond. The helical transmembrane segment at 85–105 (LLLHLTPNFCFLSLLANLLLV) threads the bilayer. The Cytoplasmic segment spans residues 106–124 (HGERYMAVLQPLRPHGSVR). The helical transmembrane segment at 125–145 (LALFLTWVSSLFFASLPALGW) threads the bilayer. Residues 146 to 164 (NHWSPDANCSSQAVFPAPY) lie on the Extracellular side of the membrane. An N-linked (GlcNAc...) asparagine glycan is attached at asparagine 153. The chain crosses the membrane as a helical span at residues 165 to 185 (LYLEVYGLLLPAVGATALLSV). Over 186–229 (RVLATAHRQLCEIRRLERAVCRDVPSTLARALTWRQARAQAGAT) the chain is Cytoplasmic. The helical transmembrane segment at 230–250 (LLFLLCWGPYVATLLLSVLAY) threads the bilayer. The Extracellular segment spans residues 251 to 260 (ERRPPLGPGT). Residues 261 to 281 (LLSLISLGSTSAAAVPVAMGL) traverse the membrane as a helical segment. Residues 282–329 (GDQRYTAPWRTAAQRCLRVLRGRAKRDNPGPSTAYHTSSQCSIDLDLN) are Cytoplasmic-facing.

It belongs to the G-protein coupled receptor 1 family.

Its subcellular location is the cell membrane. Functionally, receptor for bile acid. Bile acid-binding induces its internalization, activation of extracellular signal-regulated kinase and intracellular cAMP production. May be involved in the suppression of macrophage functions by bile acids. Involved in bile acid promoted GLP1R secretion. This Mus musculus (Mouse) protein is G-protein coupled bile acid receptor 1 (Gpbar1).